The following is an 85-amino-acid chain: Small ribosomal subunit protein uS17 (85 aa).

It belongs to the universal ribosomal protein uS17 family. Part of the 30S ribosomal subunit.

One of the primary rRNA binding proteins, it binds specifically to the 5'-end of 16S ribosomal RNA. This chain is Small ribosomal subunit protein uS17, found in Acetivibrio thermocellus (strain ATCC 27405 / DSM 1237 / JCM 9322 / NBRC 103400 / NCIMB 10682 / NRRL B-4536 / VPI 7372) (Clostridium thermocellum).